A 981-amino-acid chain; its full sequence is Echinoderm microtubule-associated protein-like 4 (981 aa).

Residue M1 is modified to N-acetylmethionine. 2 disordered regions span residues 1-20 (MDGF…TSDV) and 57-205 (DHVA…PKLI). The segment at 1–249 (MDGFAGSLDD…IPSDVDNYDD (249 aa)) is microtubule-binding. Residues S7, S13, S16, and S61 each carry the phosphoserine modification. Positions 14-63 (AASTSDVQDRLSALESRVQQQEDEITVLKAALADVLRRLAISEDHVASVK) form a coiled coil. Phosphothreonine is present on T96. Positions 114–134 (GTEKKKEKPQGQREKKEESHS) are enriched in basic and acidic residues. Position 134 is a phosphoserine; by NEK7 (S134). Residues 137–155 (QSPQIRASPSPQPSSQPLQ) show a composition bias toward low complexity. Position 144 is a phosphoserine; by NEK6 (S144). S146 bears the Phosphoserine; by NEK7 mark. Residue S171 is modified to Phosphoserine. Basic and acidic residues predominate over residues 176 to 193 (SPAEKSHNSWENSDDSRN). S200 is subject to Phosphoserine. Residue T201 is modified to Phosphothreonine. Y226 is subject to Phosphotyrosine. T237 is modified (phosphothreonine). WD repeat units lie at residues 259 to 297 (LKLE…LFNY), 301 to 348 (TQRH…VWDS), 356 to 396 (IIGL…VWDW), 403 to 438 (AEIK…FWTW), and 445 to 484 (RKQG…IWSK). Residue T490 is modified to Phosphothreonine; by NEK6. WD repeat units follow at residues 500-538 (QISK…LWDH), 543-579 (EREI…LRGT), 582-621 (DGFQ…LWNS), 625-662 (RLEW…VLDA), 668-704 (VSIH…LYVV), 711-750 (YSRY…YWDI), 760-818 (RSDC…LFQY), and 825-864 (APSH…QWKL). T609 carries the phosphothreonine; by NEK6 and NEK7 modification. Over residues 881 to 893 (LTKAPVSSTESVI) the composition is skewed to polar residues. Residues 881–981 (LTKAPVSSTE…EDQQDPSPSS (101 aa)) are disordered. S891 and S895 each carry phosphoserine. T897 and T899 each carry phosphothreonine. S903 bears the Phosphoserine mark. The segment covering 916–931 (ISSSPTLLENSLEQTV) has biased composition (polar residues). Acidic residues predominate over residues 937–946 (HSEEESEEGS). At S978 the chain carries Phosphoserine. Residue S981 is modified to Phosphoserine; by NEK6 and NEK7.

It belongs to the WD repeat EMAP family. As to quaternary structure, homotrimer; self-association is mediated by the N-terminal coiled coil. Interacts (via WD repeats) with NUDC. Interacts with alpha- and beta-tubulin during mitosis. Post-translationally, phosphorylated during mitosis. Phosphorylation at Ser-144 and Ser-146 promotes its dissociation from microtubules during mitosis which is required for efficient chromosome congression.

The protein localises to the cytoplasm. Its subcellular location is the cytoskeleton. It is found in the spindle. The protein resides in the microtubule organizing center. It localises to the midbody. In terms of biological role, essential for the formation and stability of microtubules (MTs). Required for the organization of the mitotic spindle and for the proper attachment of kinetochores to MTs. Promotes the recruitment of NUDC to the mitotic spindle for mitotic progression. In Homo sapiens (Human), this protein is Echinoderm microtubule-associated protein-like 4 (EML4).